Consider the following 466-residue polypeptide: Glutamate--tRNA ligase 2 (466 aa).

Positions 9–19 match the 'HIGH' region motif; it reads PSPTGYLHVGG. Positions 234–238 match the 'KMSKS' region motif; the sequence is PLSKR. Residue Lys-237 participates in ATP binding.

It belongs to the class-I aminoacyl-tRNA synthetase family. Glutamate--tRNA ligase type 1 subfamily. In terms of assembly, monomer.

It localises to the cytoplasm. The catalysed reaction is tRNA(Glu) + L-glutamate + ATP = L-glutamyl-tRNA(Glu) + AMP + diphosphate. Its function is as follows. Catalyzes the attachment of glutamate to tRNA(Glu) in a two-step reaction: glutamate is first activated by ATP to form Glu-AMP and then transferred to the acceptor end of tRNA(Glu). This Pseudothermotoga lettingae (strain ATCC BAA-301 / DSM 14385 / NBRC 107922 / TMO) (Thermotoga lettingae) protein is Glutamate--tRNA ligase 2.